A 420-amino-acid polypeptide reads, in one-letter code: Putative T-box protein 33 (420 aa).

Positions 93-291 (LWKELHYLSN…ANPTSRGDAK (199 aa)) form a DNA-binding region, T-box. Residues 395 to 412 (SPPLQPTATSPEASQNQI) show a composition bias toward polar residues. The disordered stretch occupies residues 395-420 (SPPLQPTATSPEASQNQIKLEMNQYM).

The protein localises to the nucleus. This is Putative T-box protein 33 (tbx-33) from Caenorhabditis elegans.